A 527-amino-acid polypeptide reads, in one-letter code: NAD(P)H-quinone oxidoreductase chain 4 1 (527 aa).

Helical transmembrane passes span 6 to 26 (FPWL…VPII), 36 to 56 (WFAL…FYSS), 91 to 111 (LIIL…PVTF), 113 to 133 (PKLF…VFAV), 136 to 156 (LLLF…ILSI), 169 to 189 (FILY…TMAF), 212 to 232 (LFLY…FPLH), 243 to 263 (TAPA…YALL), 275 to 295 (AVFA…AALT), 306 to 326 (IAYS…SFTD), 331 to 351 (GAML…FMVG), 387 to 407 (LALP…GFAT), and 417 to 437 (VIIV…LLSM).

This sequence belongs to the complex I subunit 4 family.

Its subcellular location is the cellular thylakoid membrane. The enzyme catalyses a plastoquinone + NADH + (n+1) H(+)(in) = a plastoquinol + NAD(+) + n H(+)(out). It catalyses the reaction a plastoquinone + NADPH + (n+1) H(+)(in) = a plastoquinol + NADP(+) + n H(+)(out). Its function is as follows. NDH-1 shuttles electrons from NAD(P)H, via FMN and iron-sulfur (Fe-S) centers, to quinones in the respiratory chain. The immediate electron acceptor for the enzyme in this species is believed to be plastoquinone. Couples the redox reaction to proton translocation (for every two electrons transferred, four hydrogen ions are translocated across the cytoplasmic membrane), and thus conserves the redox energy in a proton gradient. In Microcystis aeruginosa (strain NIES-843 / IAM M-2473), this protein is NAD(P)H-quinone oxidoreductase chain 4 1.